Here is a 612-residue protein sequence, read N- to C-terminus: Lysophospholipase (612 aa).

Positions 1-9 are cleaved as a signal peptide; the sequence is DITFAGVQR. Positions 24 to 571 constitute a PLA2c domain; the sequence is SCPASRPTVR…DRYCWNGTVN (548 aa). N-linked (GlcNAc...) asparagine glycans are attached at residues N41, N81, N116, N150, N223, N267, N306, N335, N427, N440, N446, N477, N498, N526, N532, N567, and N571.

It belongs to the lysophospholipase family. N-glycosylated.

The protein resides in the secreted. It catalyses the reaction a 1-acyl-sn-glycero-3-phosphocholine + H2O = sn-glycerol 3-phosphocholine + a fatty acid + H(+). Functionally, catalyzes the release of fatty acids from lysophospholipids. This chain is Lysophospholipase, found in Penicillium chrysogenum (Penicillium notatum).